Here is a 469-residue protein sequence, read N- to C-terminus: Glutamate--tRNA ligase 1 (469 aa).

The 'HIGH' region motif lies at 10–20 (PSPTGYLHIGG). The Zn(2+) site is built by C99, C101, C126, and D128. A 'KMSKS' region motif is present at residues 237–241 (RLSKR). ATP is bound at residue K240.

This sequence belongs to the class-I aminoacyl-tRNA synthetase family. Glutamate--tRNA ligase type 1 subfamily. Monomer. It depends on Zn(2+) as a cofactor.

The protein localises to the cytoplasm. The catalysed reaction is tRNA(Glu) + L-glutamate + ATP = L-glutamyl-tRNA(Glu) + AMP + diphosphate. Functionally, catalyzes the attachment of glutamate to tRNA(Glu) in a two-step reaction: glutamate is first activated by ATP to form Glu-AMP and then transferred to the acceptor end of tRNA(Glu). This chain is Glutamate--tRNA ligase 1, found in Coxiella burnetii (strain CbuK_Q154) (Coxiella burnetii (strain Q154)).